A 74-amino-acid chain; its full sequence is Exodeoxyribonuclease 7 small subunit (74 aa).

It belongs to the XseB family. In terms of assembly, heterooligomer composed of large and small subunits.

Its subcellular location is the cytoplasm. It catalyses the reaction Exonucleolytic cleavage in either 5'- to 3'- or 3'- to 5'-direction to yield nucleoside 5'-phosphates.. Its function is as follows. Bidirectionally degrades single-stranded DNA into large acid-insoluble oligonucleotides, which are then degraded further into small acid-soluble oligonucleotides. The protein is Exodeoxyribonuclease 7 small subunit of Haemophilus ducreyi (strain 35000HP / ATCC 700724).